A 380-amino-acid polypeptide reads, in one-letter code: Cysteine protease ATG4A (380 aa).

Cysteine 60 serves as the catalytic Nucleophile. Active-site residues include aspartate 262 and histidine 264. Positions 375 to 378 (FEIL) match the LIR motif.

The protein belongs to the peptidase C54 family.

It localises to the cytoplasm. It carries out the reaction [protein]-C-terminal L-amino acid-glycyl-phosphatidylethanolamide + H2O = [protein]-C-terminal L-amino acid-glycine + a 1,2-diacyl-sn-glycero-3-phosphoethanolamine. Cysteine protease that plays a key role in autophagy by mediating both proteolytic activation and delipidation of ATG8 family proteins. The protease activity is required for proteolytic activation of ATG8 family proteins: cleaves the C-terminal amino acid of ATG8 proteins to reveal a C-terminal glycine. Exposure of the glycine at the C-terminus is essential for ATG8 proteins conjugation to phosphatidylethanolamine (PE) and insertion to membranes, which is necessary for autophagy. Protease activity is also required to counteract formation of high-molecular weight conjugates of ATG8 proteins (ATG8ylation): acts as a deubiquitinating-like enzyme that removes ATG8 conjugated to other proteins, such as ATG3. In addition to the protease activity, also mediates delipidation of ATG8 family proteins. Catalyzes delipidation of PE-conjugated forms of ATG8 proteins during macroautophagy. The chain is Cysteine protease ATG4A from Gallus gallus (Chicken).